Here is a 134-residue protein sequence, read N- to C-terminus: MADGDDRGGKRTPQKKNVVVESNGRAYVKATFNNVIVTLTDQYGNTISWASAGKMGFKGSRKNTPYAAQKAGESAANEAYELGLRRVDVYVKGPGSGREGAIRAMSESGLEVASIRDVTPLPHNGCRPPKRRRV.

This sequence belongs to the universal ribosomal protein uS11 family. In terms of assembly, part of the 30S ribosomal subunit. Interacts with proteins S7 and S18. Binds to IF-3.

Its function is as follows. Located on the platform of the 30S subunit, it bridges several disparate RNA helices of the 16S rRNA. Forms part of the Shine-Dalgarno cleft in the 70S ribosome. This Salinibacter ruber (strain DSM 13855 / M31) protein is Small ribosomal subunit protein uS11.